We begin with the raw amino-acid sequence, 355 residues long: SH3 domain-containing protein Dlish (355 aa).

SH3 domains follow at residues 57-117 (SPDS…PCNT), 183-243 (EPSG…PADS), and 287-352 (YHGT…PPAM).

In terms of assembly, interacts with dachs (via C-terminus); the interaction is direct. Interacts (via N-terminus including SH3 domain 1) with palmitoyltransferase app; this leads to palmitoylation of Dlish by app. Also interacts with dco, ft, ft-regulated E3 ubiquitin ligase Fbxl7, F-box protein slmb and SCF E3 ubiquitin-protein ligase complex component Cul1. In terms of processing, palmitoylated by app.

It localises to the cytoplasm. It is found in the cell cortex. Required for the apical cell cortex localization, total cellular level and full activity of dachs. This is SH3 domain-containing protein Dlish from Drosophila melanogaster (Fruit fly).